The sequence spans 450 residues: Calcium-binding and coiled-coil domain-containing protein 2 (450 aa).

The CLIR motif lies at 133–136; the sequence is ILVV. A coiled-coil region spans residues 135 to 349; sequence VVTTQSEVEE…RENNRLLSYM (215 aa). Positions 203-206 match the LIR-like motif; that stretch reads DCWE. Residues 371-381 are interaction with LGALS8; that stretch reads DPGLVFGNPYS. The tract at residues 395-450 is interaction with MYO6; it reads KKCPTCKSDFAADVFDHNLALEQHLQTLSLNCPICDKTFPAKEKQIFEDHVFCHTL. Residues 423 to 448 form a UBZ1-type zinc finger; sequence SLNCPICDKTFPAKEKQIFEDHVFCH. Residues Cys-426, Cys-429, His-444, and His-448 each coordinate Zn(2+).

It belongs to the CALCOCO family. In terms of assembly, dimer. Part of a complex consisting of CALCOCO2, TAX1BP1 and MYO6. Interacts with GEMIN4. Interacts with ATG8 family members MAP1LC3A, MAP1LC3B, GABARAP, GABARAPL1 and GABARAPL2. Interacts with ATG8 family member MAP1LC3C. Interacts with LGALS8. Interacts with TOM1; the interaction is indirect and is mediated by MYO6, which acts as a bridge between TOM1 and CALCOCO2. Interacts with AZI2.

It localises to the cytoplasm. The protein resides in the perinuclear region. Its subcellular location is the cytoskeleton. It is found in the cytoplasmic vesicle. The protein localises to the autophagosome membrane. Its function is as follows. Xenophagy-specific receptor required for autophagy-mediated intracellular bacteria degradation. Acts as an effector protein of galectin-sensed membrane damage that restricts the proliferation of infecting pathogens upon entry into the cytosol by targeting LGALS8-associated bacteria for autophagy. Initially orchestrates bacteria targeting to autophagosomes and subsequently ensures pathogen degradation by regulating pathogen-containing autophagosome maturation. Bacteria targeting to autophagosomes relies on its interaction with MAP1LC3A, MAP1LC3B and/or GABARAPL2, whereas regulation of pathogen-containing autophagosome maturation requires the interaction with MAP3LC3C. May play a role in ruffle formation and actin cytoskeleton organization and seems to negatively regulate constitutive secretion. The chain is Calcium-binding and coiled-coil domain-containing protein 2 from Bos taurus (Bovine).